We begin with the raw amino-acid sequence, 272 residues long: Type II secretion system protein C (272 aa).

Residues Met1–Arg16 lie on the Cytoplasmic side of the membrane. Residues Ile17–Trp35 form a helical membrane-spanning segment. Over Arg36–Glu272 the chain is Periplasmic.

This sequence belongs to the GSP C family.

The protein resides in the cell inner membrane. Involved in a type II secretion system (T2SS, formerly general secretion pathway, GSP) for the export of proteins. Required for the translocation of the multiple pectic enzymes. This chain is Type II secretion system protein C (outC), found in Dickeya dadantii (strain 3937) (Erwinia chrysanthemi (strain 3937)).